Reading from the N-terminus, the 307-residue chain is MVLPFTLQQLRIFKAIASEKSFTQAAEILFVSQPSLSKQIKTLENRLGILLLNRTGNKILLTEAGVVFLQYSERILALCEESCRALNDLKDGERGNLKVGASQTIGAYLMPRVLTLFAQSYPQINLHIDIDSTRIIAKKVADRSLDIAVVGGDIPTGLKKNLEIEDFVEDELILIISKSHPFAKKKKKKISKEDLYHLNFITLNSNSTIHKFINNILIQNNIQTAQFNVIMELNSIEAIKTAVSLGLGAAFVSSSAIEKELELKTVEIITIENIRITRTLSIITNPDSHRSKAFDFFYNELWLLKNL.

Residues 5-62 (FTLQQLRIFKAIASEKSFTQAAEILFVSQPSLSKQIKTLENRLGILLLNRTGNKILLT) enclose the HTH lysR-type domain. Positions 22–41 (FTQAAEILFVSQPSLSKQIK) form a DNA-binding region, H-T-H motif.

This sequence belongs to the LysR transcriptional regulatory family.

The protein resides in the plastid. It localises to the chloroplast. Trans-acting transcriptional regulator of RuBisCO genes (rbcL and rbcS) expression. The polypeptide is Probable RuBisCO transcriptional regulator (rbcR-A) (Thalassiosira pseudonana (Marine diatom)).